Here is a 209-residue protein sequence, read N- to C-terminus: Hyperpolarization-activated voltage-gated potassium channel (209 aa).

At 1-10 (MNLKDRRLKK) the chain is on the cytoplasmic side. A helical membrane pass occupies residues 11 to 31 (IMEVLSLIFTFEIVASFILST). At 32 to 38 (YNPPYQD) the chain is on the extracellular side. Residues 39–59 (LLIKLDYISIMFFTFEFIYNF) traverse the membrane as a helical segment. Residues 60-71 (YYVEDKAKFFKD) lie on the Cytoplasmic side of the membrane. Residues 72–92 (IYNIVDAIVVIAFLLYSLQVF) traverse the membrane as a helical segment. Over 93 to 96 (YSKA) the chain is Extracellular. The helical; Voltage-sensor transmembrane segment at 97 to 117 (FLGLRVINLLRILVLLRIIKL) threads the bilayer. Residues 118–125 (RKLEENQA) are Cytoplasmic-facing. Residues 126-146 (LINFLTLLTICFIASCLIWIV) form a helical membrane-spanning segment. Over 147–181 (ESGVNPAINNFFDAFYFTTISITTVGYGDITPKTD) the chain is Extracellular. The short motif at 170-175 (TVGYGD) is the Selectivity filter element. Residues 182-202 (AGKLIIIFSVLFFISGLITSL) form a helical membrane-spanning segment. Residues 203–209 (QKALKGD) are Cytoplasmic-facing.

This sequence belongs to the potassium channel family. As to quaternary structure, homotetramer.

It is found in the cell membrane. In terms of biological role, voltage-gated potassium-selective channel opened by hyperpolarization. This is Hyperpolarization-activated voltage-gated potassium channel (mvp) from Methanocaldococcus jannaschii (strain ATCC 43067 / DSM 2661 / JAL-1 / JCM 10045 / NBRC 100440) (Methanococcus jannaschii).